Here is a 699-residue protein sequence, read N- to C-terminus: Ribosomal RNA large subunit methyltransferase K/L (699 aa).

Positions 44–155 constitute a THUMP domain; that stretch reads DAYKLCLWSR…RDNVILGIDL (112 aa).

This sequence belongs to the methyltransferase superfamily. RlmKL family.

The protein localises to the cytoplasm. The catalysed reaction is guanosine(2445) in 23S rRNA + S-adenosyl-L-methionine = N(2)-methylguanosine(2445) in 23S rRNA + S-adenosyl-L-homocysteine + H(+). It carries out the reaction guanosine(2069) in 23S rRNA + S-adenosyl-L-methionine = N(2)-methylguanosine(2069) in 23S rRNA + S-adenosyl-L-homocysteine + H(+). In terms of biological role, specifically methylates the guanine in position 2445 (m2G2445) and the guanine in position 2069 (m7G2069) of 23S rRNA. The protein is Ribosomal RNA large subunit methyltransferase K/L of Alteromonas mediterranea (strain DSM 17117 / CIP 110805 / LMG 28347 / Deep ecotype).